A 789-amino-acid chain; its full sequence is Tax1-binding protein 1 (789 aa).

Phosphoserine is present on residues Ser-124, Ser-138, and Ser-225. Residues 144-599 are a coiled coil; it reads TTKAGLLELK…LKRSLENPAE (456 aa). Residues 320–420 form an oligomerization region; that stretch reads EEIGRLQLCL…ELKLNAMKKD (101 aa). Over residues 481–502 the composition is skewed to polar residues; it reads TGNQQKVNDASVNTDPATSAST. Residues 481–508 are disordered; the sequence is TGNQQKVNDASVNTDPATSASTVDVKPS. At Ser-593 the chain carries Phosphoserine; by IKKA. Ser-609 carries the phosphoserine modification. The disordered stretch occupies residues 639-660; sequence YASQETRDGADGAFYPDEIQRP. Ser-666 carries the post-translational modification Phosphoserine; by IKKA. Positions 678–712 are disordered; sequence PARNFSRPDGLEDSEDSKEDENVPTAPDPPSQHLR. UBZ1-type zinc fingers lie at residues 727 to 753 and 754 to 780; these read HKKC…VESH and WKVC…VQTH. Zn(2+) contacts are provided by Cys-730, Cys-733, His-749, His-753, Cys-757, Cys-760, His-776, and His-780.

Homooligomer. Interacts with TNFAIP3. Interacts with STARD13. Interacts with MYO6. Interacts with TOM1; the interaction is indirect and is mediated by MYO6, which acts as a bridge between TOM1 and TAX1BP1. Interacts with MAVS; this interaction induces MAVS polyubiquitination. Interacts with TNIP1. Interacts with TRAF6; this interaction mediates deubiquitination of TRAF6 and inhibition of NF-kappa-B activation. Interacts with RIPK1; this interaction negatively regulates RIPK1 ubiquitination. Interacts with NBR1. Interacts with TBK1. Interacts with RB1CC1. Interacts with SQSTM1. Interacts with AZI2. Interacts with TICAM1 and TRIM32; these interactions target TICAM1 to TAX1BP1-mediated selective autophagic degradation. In terms of assembly, (Microbial infection) Interacts with the HTLV-1 protein Tax. As to quaternary structure, (Microbial infection) Interacts with Respiratory syncytial virus protein N; this interaction may promote viral growth by inhibiting the innate immune response. (Microbial infection) Interacts with Lassa virus protein Z. In terms of assembly, (Microbial infection) Interacts with Mopeia virus protein Z. Post-translationally, phosphorylated in the C-terminal region by CHUK/IKKA leading to NF-kappa-B signaling down-regulation. In terms of tissue distribution, expressed in all tissues tested.

The protein localises to the cytoplasm. It localises to the mitochondrion. Its subcellular location is the preautophagosomal structure. It is found in the cytoplasmic vesicle. The protein resides in the autophagosome. Functionally, ubiquitin-binding adapter that participates in inflammatory, antiviral and innate immune processes as well as selective autophagy regulation. Plays a key role in the negative regulation of NF-kappa-B and IRF3 signalings by acting as an adapter for the ubiquitin-editing enzyme A20/TNFAIP3 to bind and inactivate its substrates. Disrupts the interactions between the E3 ubiquitin ligase TRAF3 and TBK1/IKBKE to attenuate 'Lys63'-linked polyubiquitination of TBK1 and thereby IFN-beta production. Also recruits A20/TNFAIP3 to ubiquitinated signaling proteins TRAF6 and RIPK1, leading to their deubiquitination and disruption of IL-1 and TNF-induced NF-kappa-B signaling pathways. Inhibits virus-induced apoptosis by inducing the 'Lys-48'-linked polyubiquitination and degradation of MAVS via recruitment of the E3 ligase ITCH, thereby attenuating MAVS-mediated apoptosis signaling. As a macroautophagy/autophagy receptor, facilitates the xenophagic clearance of pathogenic bacteria such as Salmonella typhimurium and Mycobacterium tuberculosis. Upon NBR1 recruitment to the SQSTM1-ubiquitin condensates, acts as the major recruiter of RB1CC1 to these ubiquitin condensates to promote their autophagic degradation. Mediates the autophagic degradation of other substrates including TICAM1. The polypeptide is Tax1-binding protein 1 (TAX1BP1) (Homo sapiens (Human)).